The primary structure comprises 435 residues: MKKKIVAIIGRPNVGKSSLFNRIIKEKKSIVDNKPGVTRDRIYSNAEWLTREFILVDTGGISIDQQLFSNEIQIQTQIAIEQADVIIFVVDFLNRLDKDDKMIAKILHKSKKPVILAINKYDKKTIDDHNYEFMNLGFSDLYFISSTHGIGIGDLLDKVISYISKNDVDLKDDSTKIAIIGRPNVGKSSLVNSLVNENRMIVSEIEGTTLDAVDISFSYNKNKYTVIDTAGIRKKSKLGQTVEKYSYLRSLSAITNSDIVLLMIDATKPITDQDTNIGGLIYDEKKPVIIVVNKWDLVKNKQEQILKKEEEIRAYFKYISYAKIIFISALDKTRVTKILDLVADIKQSLSVKVKTYVLNEVLNKAQLINPAPEFNGNRLKIYYASQVQAYIPTFVLFCNHPNYLHFSYKRFLENQIRFSFGFDSIPINLIFRERK.

2 consecutive EngA-type G domains span residues 4 to 167 and 175 to 350; these read KIVA…SKND and TKIA…QSLS. GTP contacts are provided by residues 10 to 17, 57 to 61, 119 to 122, 181 to 188, 228 to 232, and 293 to 296; these read GRPNVGKS, DTGGI, NKYD, DTAGI, and NKWD. The 85-residue stretch at 351–435 folds into the KH-like domain; that stretch reads VKVKTYVLNE…PINLIFRERK (85 aa).

It belongs to the TRAFAC class TrmE-Era-EngA-EngB-Septin-like GTPase superfamily. EngA (Der) GTPase family. As to quaternary structure, associates with the 50S ribosomal subunit.

Its function is as follows. GTPase that plays an essential role in the late steps of ribosome biogenesis. This Mycoplasma mycoides subsp. mycoides SC (strain CCUG 32753 / NCTC 10114 / PG1) protein is GTPase Der.